Reading from the N-terminus, the 415-residue chain is Histidine--tRNA ligase (415 aa).

The protein belongs to the class-II aminoacyl-tRNA synthetase family. Homodimer.

It is found in the cytoplasm. It carries out the reaction tRNA(His) + L-histidine + ATP = L-histidyl-tRNA(His) + AMP + diphosphate + H(+). The chain is Histidine--tRNA ligase from Clostridium perfringens (strain SM101 / Type A).